Here is a 699-residue protein sequence, read N- to C-terminus: Polyribonucleotide nucleotidyltransferase (699 aa).

Mg(2+)-binding residues include Asp485 and Asp491. Positions 552-611 (PRITTIKINPEKIRDVIGKGGAVIRALTEETGTTIELEDDGTVKIASNNGDATREAIRRI) constitute a KH domain. The S1 motif domain maps to 621–689 (GRLYTGKVIR…RQGRVRLSIK (69 aa)).

This sequence belongs to the polyribonucleotide nucleotidyltransferase family. Component of the RNA degradosome, which is a multiprotein complex involved in RNA processing and mRNA degradation. It depends on Mg(2+) as a cofactor.

Its subcellular location is the cytoplasm. It catalyses the reaction RNA(n+1) + phosphate = RNA(n) + a ribonucleoside 5'-diphosphate. Functionally, involved in mRNA degradation. Catalyzes the phosphorolysis of single-stranded polyribonucleotides processively in the 3'- to 5'-direction. This Shewanella amazonensis (strain ATCC BAA-1098 / SB2B) protein is Polyribonucleotide nucleotidyltransferase.